The primary structure comprises 106 residues: UPF0060 membrane protein AZC_0909 (106 aa).

4 consecutive transmembrane segments (helical) span residues 4–24, 27–47, 58–78, and 84–104; these read PLFA…WHVV, GGSP…AALL, AFAA…WAAE, and RFDA…LFAP.

This sequence belongs to the UPF0060 family.

The protein resides in the cell inner membrane. This Azorhizobium caulinodans (strain ATCC 43989 / DSM 5975 / JCM 20966 / LMG 6465 / NBRC 14845 / NCIMB 13405 / ORS 571) protein is UPF0060 membrane protein AZC_0909.